The chain runs to 321 residues: Peptidase 1 (321 aa).

Residues 1–18 (MKIILAIASLLVLSAVYA) form the signal peptide. A propeptide spanning residues 19 to 98 (RPASIKTFEE…LKTQFDLNAE (80 aa)) is cleaved from the precursor. A glycan (N-linked (GlcNAc...) asparagine) is linked at Asn34. Residues Cys130 and Cys170 are joined by a disulfide bond. The active site involves Cys133. Asn151 carries N-linked (GlcNAc...) asparagine glycosylation. Catalysis depends on residues His269 and Asn289.

The protein belongs to the peptidase C1 family.

The protein resides in the secreted. It catalyses the reaction Broad endopeptidase specificity.. Its function is as follows. Probable thiol protease. This is Peptidase 1 (EURM1) from Euroglyphus maynei (Mayne's house dust mite).